Consider the following 199-residue polypeptide: HTH-type transcriptional regulator BetI (199 aa).

The region spanning 8–68 (EIRKPQLVKA…ETMREILRQL (61 aa)) is the HTH tetR-type domain. Residues 31–50 (SISLISKEAGVSTGIINHYF) constitute a DNA-binding region (H-T-H motif).

The protein operates within amine and polyamine biosynthesis; betaine biosynthesis via choline pathway [regulation]. Its function is as follows. Repressor involved in the biosynthesis of the osmoprotectant glycine betaine. It represses transcription of the choline transporter BetT and the genes of BetAB involved in the synthesis of glycine betaine. The chain is HTH-type transcriptional regulator BetI from Vibrio campbellii (strain ATCC BAA-1116).